Reading from the N-terminus, the 347-residue chain is Protein RecA (347 aa).

67–74 (GPESSGKT) contributes to the ATP binding site. A disordered region spans residues 326-347 (DKLLPGRAPSSEAQGTESGQEA). Over residues 336–347 (SEAQGTESGQEA) the composition is skewed to polar residues.

Belongs to the RecA family.

The protein resides in the cytoplasm. Functionally, can catalyze the hydrolysis of ATP in the presence of single-stranded DNA, the ATP-dependent uptake of single-stranded DNA by duplex DNA, and the ATP-dependent hybridization of homologous single-stranded DNAs. It interacts with LexA causing its activation and leading to its autocatalytic cleavage. This Alkalilimnicola ehrlichii (strain ATCC BAA-1101 / DSM 17681 / MLHE-1) protein is Protein RecA.